We begin with the raw amino-acid sequence, 286 residues long: CCR4-NOT transcription complex subunit 7 (286 aa).

The a divalent metal cation site is built by aspartate 40, glutamate 42, aspartate 161, aspartate 230, and glutamate 278.

Belongs to the CAF1 family. As to quaternary structure, component of the CCR4-NOT complex. Mn(2+) is required as a cofactor. Requires Mg(2+) as cofactor. The cofactor is Co(2+).

It localises to the nucleus. The protein localises to the cytoplasm. It carries out the reaction Exonucleolytic cleavage of poly(A) to 5'-AMP.. Has 3'-5' poly(A) exoribonuclease activity for synthetic poly(A) RNA substrate. Catalytic component of the CCR4-NOT complex which is one of the major cellular mRNA deadenylases and is linked to various cellular processes including bulk mRNA degradation, miRNA-mediated repression, translational repression during translational initiation and general transcription regulation. During miRNA-mediated repression the complex also seems to act as translational repressor during translational initiation. Additional complex functions may be a consequence of its influence on mRNA expression. The polypeptide is CCR4-NOT transcription complex subunit 7 (cnot7) (Danio rerio (Zebrafish)).